The following is a 325-amino-acid chain: Elongation factor P--(R)-beta-lysine ligase (325 aa).

76 to 78 (SPE) is a substrate binding site. Residues 100–102 (RNE) and Asn109 each bind ATP. Tyr118 serves as a coordination point for substrate. Residue 244–245 (EL) participates in ATP binding. Glu251 provides a ligand contact to substrate. Position 300 (Gly300) interacts with ATP.

It belongs to the class-II aminoacyl-tRNA synthetase family. EpmA subfamily. Homodimer.

The catalysed reaction is D-beta-lysine + L-lysyl-[protein] + ATP = N(6)-((3R)-3,6-diaminohexanoyl)-L-lysyl-[protein] + AMP + diphosphate + H(+). With EpmB is involved in the beta-lysylation step of the post-translational modification of translation elongation factor P (EF-P). Catalyzes the ATP-dependent activation of (R)-beta-lysine produced by EpmB, forming a lysyl-adenylate, from which the beta-lysyl moiety is then transferred to the epsilon-amino group of a conserved specific lysine residue in EF-P. In Yersinia pseudotuberculosis serotype O:1b (strain IP 31758), this protein is Elongation factor P--(R)-beta-lysine ligase.